Reading from the N-terminus, the 544-residue chain is Chaperonin GroEL (544 aa).

ATP is bound by residues 30–33 (TLGP), K51, 87–91 (DGTTT), G415, and D495.

The protein belongs to the chaperonin (HSP60) family. Forms a cylinder of 14 subunits composed of two heptameric rings stacked back-to-back. Interacts with the co-chaperonin GroES.

The protein resides in the cytoplasm. The enzyme catalyses ATP + H2O + a folded polypeptide = ADP + phosphate + an unfolded polypeptide.. Together with its co-chaperonin GroES, plays an essential role in assisting protein folding. The GroEL-GroES system forms a nano-cage that allows encapsulation of the non-native substrate proteins and provides a physical environment optimized to promote and accelerate protein folding. The chain is Chaperonin GroEL from Neisseria meningitidis serogroup C (strain 053442).